A 251-amino-acid chain; its full sequence is tRNA pseudouridine synthase A (251 aa).

Asp-26 serves as the catalytic Nucleophile. Residue Tyr-98 coordinates substrate.

The protein belongs to the tRNA pseudouridine synthase TruA family. As to quaternary structure, homodimer.

It carries out the reaction uridine(38/39/40) in tRNA = pseudouridine(38/39/40) in tRNA. Functionally, formation of pseudouridine at positions 38, 39 and 40 in the anticodon stem and loop of transfer RNAs. In Mycolicibacterium paratuberculosis (strain ATCC BAA-968 / K-10) (Mycobacterium paratuberculosis), this protein is tRNA pseudouridine synthase A.